The sequence spans 469 residues: Bifunctional protein GlmU (469 aa).

A pyrophosphorylase region spans residues 1 to 237 (MTTNRKFAIA…SHEVLGVNTR (237 aa)). Residues 12–15 (LAAG), lysine 26, glutamine 78, 83–84 (GT), 105–107 (SGD), glycine 144, glutamate 162, asparagine 177, and asparagine 235 contribute to the UDP-N-acetyl-alpha-D-glucosamine site. Aspartate 107 is a binding site for Mg(2+). Residue asparagine 235 participates in Mg(2+) binding. Residues 238–258 (QDLASLDAHLRLQKCQQLMSA) are linker. Positions 259-469 (GVSIFKPETC…KKRAEQKKKK (211 aa)) are N-acetyltransferase. UDP-N-acetyl-alpha-D-glucosamine is bound by residues arginine 341 and lysine 359. The Proton acceptor role is filled by histidine 371. The UDP-N-acetyl-alpha-D-glucosamine site is built by tyrosine 374 and asparagine 385. Residues alanine 388, 394–395 (NY), serine 413, alanine 431, and arginine 448 contribute to the acetyl-CoA site.

This sequence in the N-terminal section; belongs to the N-acetylglucosamine-1-phosphate uridyltransferase family. It in the C-terminal section; belongs to the transferase hexapeptide repeat family. In terms of assembly, homotrimer. The cofactor is Mg(2+).

The protein resides in the cytoplasm. The enzyme catalyses alpha-D-glucosamine 1-phosphate + acetyl-CoA = N-acetyl-alpha-D-glucosamine 1-phosphate + CoA + H(+). It catalyses the reaction N-acetyl-alpha-D-glucosamine 1-phosphate + UTP + H(+) = UDP-N-acetyl-alpha-D-glucosamine + diphosphate. It participates in nucleotide-sugar biosynthesis; UDP-N-acetyl-alpha-D-glucosamine biosynthesis; N-acetyl-alpha-D-glucosamine 1-phosphate from alpha-D-glucosamine 6-phosphate (route II): step 2/2. The protein operates within nucleotide-sugar biosynthesis; UDP-N-acetyl-alpha-D-glucosamine biosynthesis; UDP-N-acetyl-alpha-D-glucosamine from N-acetyl-alpha-D-glucosamine 1-phosphate: step 1/1. It functions in the pathway bacterial outer membrane biogenesis; LPS lipid A biosynthesis. Catalyzes the last two sequential reactions in the de novo biosynthetic pathway for UDP-N-acetylglucosamine (UDP-GlcNAc). The C-terminal domain catalyzes the transfer of acetyl group from acetyl coenzyme A to glucosamine-1-phosphate (GlcN-1-P) to produce N-acetylglucosamine-1-phosphate (GlcNAc-1-P), which is converted into UDP-GlcNAc by the transfer of uridine 5-monophosphate (from uridine 5-triphosphate), a reaction catalyzed by the N-terminal domain. This is Bifunctional protein GlmU from Koribacter versatilis (strain Ellin345).